The chain runs to 671 residues: Acetyl-coenzyme A synthetase (671 aa).

Residues 1 to 21 (MPTASASESSSNQPESSNASG) are disordered. Residues 221 to 224 (RRGK), Thr339, and Asn363 contribute to the CoA site. ATP is bound by residues 415-417 (GEG), 439-444 (DTWWQT), Asp528, and Arg543. Ser551 provides a ligand contact to CoA. ATP is bound at residue Arg554. Mg(2+)-binding residues include Val565, His567, and Val570. Arg611 is a binding site for CoA. Lys636 bears the N6-acetyllysine mark.

It belongs to the ATP-dependent AMP-binding enzyme family. The cofactor is Mg(2+). In terms of processing, acetylated. Deacetylation by the SIR2-homolog deacetylase activates the enzyme.

It carries out the reaction acetate + ATP + CoA = acetyl-CoA + AMP + diphosphate. Catalyzes the conversion of acetate into acetyl-CoA (AcCoA), an essential intermediate at the junction of anabolic and catabolic pathways. AcsA undergoes a two-step reaction. In the first half reaction, AcsA combines acetate with ATP to form acetyl-adenylate (AcAMP) intermediate. In the second half reaction, it can then transfer the acetyl group from AcAMP to the sulfhydryl group of CoA, forming the product AcCoA. The protein is Acetyl-coenzyme A synthetase of Rhodopirellula baltica (strain DSM 10527 / NCIMB 13988 / SH1).